We begin with the raw amino-acid sequence, 513 residues long: MSKRALISVSDKTGLVELARGLVELGWELLSTGGTARTLIAAGLPVTEVAAVTGFPEILDGRVKTLHPKIHGGILARPTPEHLAQLQEQGIQPIDLVVVNLYPFRETIARPGVTPAEAIENIDIGGPAMVRAAAKNHERVGIVVDPASYNEVLTELREKGSLSPETRRRLAAAAFAHTAAYDAAIAAYFQRLMRNEEPFPASFVLSGEKVQDLRYGENPHQGAAFYRLPAPPPGTLAGARQLQGKELSYNNLMDLDAAWNLACDFKEPVVAIIKHTNPCGVARASTPAAAYRLAYAADPVSAFGGIVACNRPVDGEMAGAMTEIFLEAVIAPSFTPEAMAILKSKSNLRLLAAGERAGCRTREYQIRPVSGGFLVQEPDYHVLEPESLKVVTARKPEAKEMADLLFAWQVVKHVKSNAIVVARDGVTLGIGAGQMNRVGAARIALEQAGARAKGAVLASDAFFPFGDTVELAAGAGITAIIQPGGSIRDEESIRAADAAGIAMVFTGIRHFRH.

Residues 1–144 enclose the MGS-like domain; sequence MSKRALISVS…KNHERVGIVV (144 aa).

It belongs to the PurH family.

It catalyses the reaction (6R)-10-formyltetrahydrofolate + 5-amino-1-(5-phospho-beta-D-ribosyl)imidazole-4-carboxamide = 5-formamido-1-(5-phospho-D-ribosyl)imidazole-4-carboxamide + (6S)-5,6,7,8-tetrahydrofolate. The enzyme catalyses IMP + H2O = 5-formamido-1-(5-phospho-D-ribosyl)imidazole-4-carboxamide. It participates in purine metabolism; IMP biosynthesis via de novo pathway; 5-formamido-1-(5-phospho-D-ribosyl)imidazole-4-carboxamide from 5-amino-1-(5-phospho-D-ribosyl)imidazole-4-carboxamide (10-formyl THF route): step 1/1. The protein operates within purine metabolism; IMP biosynthesis via de novo pathway; IMP from 5-formamido-1-(5-phospho-D-ribosyl)imidazole-4-carboxamide: step 1/1. The protein is Bifunctional purine biosynthesis protein PurH of Moorella thermoacetica (strain ATCC 39073 / JCM 9320).